The sequence spans 1790 residues: Cytokinesis protein sepA (1790 aa).

Disordered regions lie at residues 1–275 (MPTS…YLTR) and 328–350 (GEQKRKQKARETHGYDGPSGILE). Residues 24–35 (ERPVEDRWDAHG) are compositionally biased toward basic and acidic residues. Composition is skewed to low complexity over residues 39–62 (SLAPPSSAAGSRSSRYSKRSSIQS) and 187–203 (SHHSSSTVDSSTNSRMS). The span at 205–236 (DQASIHSSLSSNTRGSSYISTDGSSRTTLPSH) shows a compositional bias: polar residues. One can recognise a GBD/FH3 domain in the interval 274 to 702 (TRPRDDRVVD…YVAMDRRLPD (429 aa)). A compositionally biased stretch (basic and acidic residues) spans 328–341 (GEQKRKQKARETHG). Residues 724–811 (AEARRAYDES…QRNELETREL (88 aa)) are a coiled coil. An FH1 domain is found at 955–1136 (DPEQATGLLG…NYLASQGAPS (182 aa)). Residues 975-986 (ADDAKDEGKPTE) show a composition bias toward basic and acidic residues. 3 disordered regions span residues 975 to 1119 (ADDA…PPGT), 1465 to 1484 (NLSDPKKFHPQDRVSQITQR), and 1596 to 1790 (RAAA…PSTS). Composition is skewed to pro residues over residues 1015 to 1026 (APPPPPPPPPAH) and 1033 to 1118 (APPP…PPPG). The 424-residue stretch at 1141–1564 (VMSSIRPKKK…TEASLARKRI (424 aa)) folds into the FH2 domain. Residues 1435 to 1566 (LQKLNVDQLR…ASLARKRINV (132 aa)) adopt a coiled-coil conformation. The region spanning 1581–1613 (SPATSGAMDSLLEKLRAAAPQAKDQRDRRRRAR) is the DAD domain. The span at 1608–1620 (RRRRARLKERHQV) shows a compositional bias: basic residues. Positions 1644–1661 (SGATDTNATDSSLLSPTI) are enriched in polar residues. A compositionally biased stretch (basic and acidic residues) spans 1694-1710 (PDPERTRRRRESAEEER). Positions 1720–1746 (GATSGSKDSNDTTPLSPVTEPTSTQGE) are enriched in polar residues.

Belongs to the formin homology family. BNI1 subfamily.

In terms of biological role, involved in cytokinesis. Overexpression results in growth inhibition. This Emericella nidulans (strain FGSC A4 / ATCC 38163 / CBS 112.46 / NRRL 194 / M139) (Aspergillus nidulans) protein is Cytokinesis protein sepA (sepA).